The sequence spans 319 residues: Phospho-N-acetylmuramoyl-pentapeptide-transferase (319 aa).

Helical transmembrane passes span 5 to 25 (LIAF…LIIW), 51 to 71 (TMGG…ICAY), 79 to 99 (VWIL…DDGL), 119 to 139 (LLVA…FALY), 149 to 169 (VVLF…AVNL), 173 to 193 (LDGL…WLAF), 197 to 217 (NFGV…FFMF), 224 to 246 (IFMG…IFLG), and 299 to 319 (VDLV…MIWG).

Belongs to the glycosyltransferase 4 family. MraY subfamily. It depends on Mg(2+) as a cofactor.

It localises to the cell membrane. The catalysed reaction is UDP-N-acetyl-alpha-D-muramoyl-L-alanyl-gamma-D-glutamyl-L-lysyl-D-alanyl-D-alanine + di-trans,octa-cis-undecaprenyl phosphate = Mur2Ac(oyl-L-Ala-gamma-D-Glu-L-Lys-D-Ala-D-Ala)-di-trans,octa-cis-undecaprenyl diphosphate + UMP. Its pathway is cell wall biogenesis; peptidoglycan biosynthesis. Its function is as follows. Catalyzes the initial step of the lipid cycle reactions in the biosynthesis of the cell wall peptidoglycan: transfers peptidoglycan precursor phospho-MurNAc-pentapeptide from UDP-MurNAc-pentapeptide onto the lipid carrier undecaprenyl phosphate, yielding undecaprenyl-pyrophosphoryl-MurNAc-pentapeptide, known as lipid I. This Lactobacillus delbrueckii subsp. bulgaricus (strain ATCC BAA-365 / Lb-18) protein is Phospho-N-acetylmuramoyl-pentapeptide-transferase.